Reading from the N-terminus, the 175-residue chain is ATP synthase subunit b, chloroplastic (175 aa).

Residues 26–44 form a helical membrane-spanning segment; it reads VINLAVVIGVVVSFVGDAV.

This sequence belongs to the ATPase B chain family. As to quaternary structure, F-type ATPases have 2 components, F(1) - the catalytic core - and F(0) - the membrane proton channel. F(1) has five subunits: alpha(3), beta(3), gamma(1), delta(1), epsilon(1). F(0) has four main subunits: a(1), b(1), b'(1) and c(10-14). The alpha and beta chains form an alternating ring which encloses part of the gamma chain. F(1) is attached to F(0) by a central stalk formed by the gamma and epsilon chains, while a peripheral stalk is formed by the delta, b and b' chains.

It localises to the plastid. The protein localises to the chloroplast thylakoid membrane. Functionally, f(1)F(0) ATP synthase produces ATP from ADP in the presence of a proton or sodium gradient. F-type ATPases consist of two structural domains, F(1) containing the extramembraneous catalytic core and F(0) containing the membrane proton channel, linked together by a central stalk and a peripheral stalk. During catalysis, ATP synthesis in the catalytic domain of F(1) is coupled via a rotary mechanism of the central stalk subunits to proton translocation. Its function is as follows. Component of the F(0) channel, it forms part of the peripheral stalk, linking F(1) to F(0). The protein is ATP synthase subunit b, chloroplastic of Tupiella akineta (Green alga).